Reading from the N-terminus, the 672-residue chain is Peptidoglycan D,D-transpeptidase MrdA (672 aa).

The helical transmembrane segment at 21-41 threads the bilayer; sequence IFFAVGLVIICLLVLASRYAY. Ser-326 functions as the Acyl-ester intermediate in the catalytic mechanism. Asp-350, Asp-365, His-371, and Cys-384 together coordinate Zn(2+). The interval 616–672 is disordered; it reads ANHQVNGGLMTAGIKPGELPSGNESASSTPATSAPTSAAASTPQATPTRPATNEVDE. Residues 640–672 show a composition bias toward low complexity; sequence SASSTPATSAPTSAAASTPQATPTRPATNEVDE.

Belongs to the transpeptidase family. MrdA subfamily. As to quaternary structure, monomer. It depends on Zn(2+) as a cofactor.

The protein localises to the cell inner membrane. The enzyme catalyses Preferential cleavage: (Ac)2-L-Lys-D-Ala-|-D-Ala. Also transpeptidation of peptidyl-alanyl moieties that are N-acyl substituents of D-alanine.. The protein operates within cell wall biogenesis; peptidoglycan biosynthesis. Its activity is regulated as follows. Inhibited by the beta-lactams sulbactam and piperacillin-tazobactam. Its function is as follows. Catalyzes cross-linking of the peptidoglycan cell wall. Involved in the determination of the rod shape of the cell. The protein is Peptidoglycan D,D-transpeptidase MrdA of Acinetobacter baumannii (strain ATCC 19606 / DSM 30007 / JCM 6841 / CCUG 19606 / CIP 70.34 / NBRC 109757 / NCIMB 12457 / NCTC 12156 / 81).